A 393-amino-acid polypeptide reads, in one-letter code: MQQTKKLTHSDITIAVMSGPFLQRGEPALVSKWYRTKMALACGVDLVVELPYAFSTQKAETFANGAISILNALHVSEICFGSEDGQIENFYNTISVQKNEEETFNRLVKQFMNAGNSYAKATSEAFLHILSSEKNIDMSQPNNILGFQYIKAILMQNSSMQAQTIKRFASHYHDETFNDQHIASATSIRKQLFSENSSFTEIESFIPKATASLLASYKQNYGTLHNWEQYFSFFKYKLMTMSPENLRHIYEIEEGLEHRILSKIQTSSSFHSFMESLKTKRYTWTRLQRACTHILTNTTKEEIYCANIEQHAPYIRLLGMSQKGQTYLSKNKKKIELPILTHTKTFDHPTLHIERKANSVYFSIMKEPLRTQLLKRDATHHPIRYDETTAKFL.

The ATP site is built by Gly81, Asn142, and Arg167.

Belongs to the TmcAL family.

It is found in the cytoplasm. The enzyme catalyses cytidine(34) in elongator tRNA(Met) + acetate + ATP = N(4)-acetylcytidine(34) in elongator tRNA(Met) + AMP + diphosphate. In terms of biological role, catalyzes the formation of N(4)-acetylcytidine (ac(4)C) at the wobble position of elongator tRNA(Met), using acetate and ATP as substrates. First activates an acetate ion to form acetyladenylate (Ac-AMP) and then transfers the acetyl group to tRNA to form ac(4)C34. The sequence is that of tRNA(Met) cytidine acetate ligase from Bacillus anthracis (strain A0248).